Reading from the N-terminus, the 282-residue chain is ATP synthase gamma chain (282 aa).

The protein belongs to the ATPase gamma chain family. As to quaternary structure, F-type ATPases have 2 components, CF(1) - the catalytic core - and CF(0) - the membrane proton channel. CF(1) has five subunits: alpha(3), beta(3), gamma(1), delta(1), epsilon(1). CF(0) has three main subunits: a, b and c.

The protein localises to the cell membrane. Produces ATP from ADP in the presence of a proton gradient across the membrane. The gamma chain is believed to be important in regulating ATPase activity and the flow of protons through the CF(0) complex. This is ATP synthase gamma chain from Clostridium botulinum (strain Okra / Type B1).